The sequence spans 57 residues: Protein translocase subunit SecE (57 aa).

The helical transmembrane segment at 30–50 (LIAGAGIVFVGFLGFLIFAIM) threads the bilayer.

It belongs to the SecE/SEC61-gamma family. Component of the Sec protein translocase complex. Heterotrimer consisting of SecY (alpha), SecG (beta) and SecE (gamma) subunits. The heterotrimers can form oligomers, although 1 heterotrimer is thought to be able to translocate proteins. Interacts with the ribosome. May interact with SecDF, and other proteins may be involved.

It localises to the cell membrane. Functionally, essential subunit of the Sec protein translocation channel SecYEG. Clamps together the 2 halves of SecY. May contact the channel plug during translocation. In Haloquadratum walsbyi (strain DSM 16790 / HBSQ001), this protein is Protein translocase subunit SecE.